Consider the following 118-residue polypeptide: Phosphoribosyl-AMP cyclohydrolase (118 aa).

Mg(2+) is bound at residue Asp87. Cys88 contacts Zn(2+). Residues Asp89 and Asp91 each contribute to the Mg(2+) site. Residues Cys104 and Cys111 each contribute to the Zn(2+) site.

Belongs to the PRA-CH family. As to quaternary structure, homodimer. It depends on Mg(2+) as a cofactor. Requires Zn(2+) as cofactor.

The protein resides in the cytoplasm. It carries out the reaction 1-(5-phospho-beta-D-ribosyl)-5'-AMP + H2O = 1-(5-phospho-beta-D-ribosyl)-5-[(5-phospho-beta-D-ribosylamino)methylideneamino]imidazole-4-carboxamide. Its pathway is amino-acid biosynthesis; L-histidine biosynthesis; L-histidine from 5-phospho-alpha-D-ribose 1-diphosphate: step 3/9. Functionally, catalyzes the hydrolysis of the adenine ring of phosphoribosyl-AMP. This is Phosphoribosyl-AMP cyclohydrolase from Corynebacterium glutamicum (strain R).